The chain runs to 549 residues: Cation/acetate symporter ActP (549 aa).

13 helical membrane-spanning segments follow: residues 33–53, 77–97, 103–123, 148–168, 183–203, 206–226, 262–282, 303–323, 355–375, 404–424, 428–448, 464–484, and 493–513; these read WQAI…TYWA, LAIA…ALVF, GLIY…LIAE, ILSA…QMVG, IAVV…GMLA, WVQI…AFMV, ISAL…PHIL, GFMG…IMLV, LFLG…VAGL, VSKI…VLFE, IAFM…PIIL, GGWL…TIWV, and IFPY…GIWF.

This sequence belongs to the sodium:solute symporter (SSF) (TC 2.A.21) family.

Its subcellular location is the cell inner membrane. Its function is as follows. Transports acetate. The sequence is that of Cation/acetate symporter ActP from Salmonella agona (strain SL483).